We begin with the raw amino-acid sequence, 213 residues long: Glutathione S-transferase (213 aa).

The region spanning 4–81 is the GST N-terminal domain; sequence AKPILYGAWI…YLEDKYPQHP (78 aa). One can recognise a GST C-terminal domain in the interval 86–211; it reads DIKTKGLDLQ…LPQNQPDAPS (126 aa).

The protein belongs to the GST superfamily. Zeta family.

It localises to the cytoplasm. The enzyme catalyses RX + glutathione = an S-substituted glutathione + a halide anion + H(+). Its function is as follows. Has a glutathione transferase activity with ethacrynic acid and nitrophenyl acetate. Has low glutathione peroxidase activity with cumene hydroperoxide. This chain is Glutathione S-transferase (GSTZ1), found in Triticum aestivum (Wheat).